A 1783-amino-acid chain; its full sequence is Chitin synthase A (1783 aa).

Residues Asn-159, Asn-637, Asn-652, Asn-664, and Asn-669 are each glycosylated (N-linked (GlcNAc...) asparagine). Helical transmembrane passes span 745 to 765 (IWVAIVWFWTFWIPSPLLSFV) and 781 to 801 (LTLVWFIVLINAAIVFWIVAF). Residues Asn-1014 and Asn-1018 are each glycosylated (N-linked (GlcNAc...) asparagine). The helical transmembrane segment at 1051 to 1071 (IMLAMTIILCSVILVKFLAAL) threads the bilayer. Residue Asn-1416 is glycosylated (N-linked (GlcNAc...) asparagine). 3 helical membrane-spanning segments follow: residues 1441 to 1461 (FVVFIDLFGTIILPATTIYLG), 1474 to 1494 (FPIISIIMLAAVYGLQALIFI), and 1502 to 1522 (IGWMIIYIMAFPIYSFALPIY). Asn-1529 and Asn-1617 each carry an N-linked (GlcNAc...) asparagine glycan. Positions 1659 to 1724 (THDINRGQTP…SFDFQRGNMQ (66 aa)) are disordered. Polar residues predominate over residues 1664–1688 (RGQTPFQDFPSSRPSVSNLRGQANP). N-linked (GlcNAc...) asparagine glycosylation occurs at Asn-1695. Positions 1725 to 1781 (GPDDSMIIEAIQGVLREVDLDTVTKKQVRALVEQRLQTGLVGERRTFMDRQIDNELA) constitute a DEK-C domain.

It belongs to the chitin synthase family. Class V subfamily.

The protein localises to the cell membrane. It carries out the reaction [(1-&gt;4)-N-acetyl-beta-D-glucosaminyl](n) + UDP-N-acetyl-alpha-D-glucosamine = [(1-&gt;4)-N-acetyl-beta-D-glucosaminyl](n+1) + UDP + H(+). Its function is as follows. Polymerizes chitin, a structural polymer of the cell wall and septum, by transferring the sugar moiety of UDP-GlcNAc to the non-reducing end of the growing chitin polymer. Responsible for about 29% of the chitin in conidial walls, is essential for conidial wall strength in media with high water potential and contributes to strength of hyphal tips. The chain is Chitin synthase A from Colletotrichum graminicola (Maize anthracnose fungus).